A 951-amino-acid chain; its full sequence is Serine/threonine-protein kinase ATG1 (951 aa).

One can recognise a Protein kinase domain in the interval 22–327 (FTINEEIGKG…FPEYFAHPVV (306 aa)). ATP contacts are provided by residues 28 to 36 (IGKGSFATV) and K51. The Proton acceptor role is filled by D165. 4 disordered regions span residues 343 to 375 (IITP…PVET), 387 to 458 (EQAP…YDEQ), 514 to 573 (HIPK…SSPS), and 924 to 951 (HQSM…TPPH). Composition is skewed to basic and acidic residues over residues 359–368 (SLRERQRENP) and 432–442 (PRQRDRTERHY). Polar residues-rich tracts occupy residues 547–573 (AQGN…SSPS) and 939–951 (GGTT…TPPH).

Belongs to the protein kinase superfamily. Ser/Thr protein kinase family. APG1/unc-51/ULK1 subfamily. In terms of assembly, homodimer. Forms a ternary complex with ATG13 and ATG17.

It is found in the cytoplasm. It localises to the preautophagosomal structure membrane. It carries out the reaction L-seryl-[protein] + ATP = O-phospho-L-seryl-[protein] + ADP + H(+). It catalyses the reaction L-threonyl-[protein] + ATP = O-phospho-L-threonyl-[protein] + ADP + H(+). In terms of biological role, serine/threonine protein kinase involved in the cytoplasm to vacuole transport (Cvt) and found to be essential in autophagy, where it is required for the formation of autophagosomes. Involved in the clearance of protein aggregates which cannot be efficiently cleared by the proteasome. Required for selective autophagic degradation of the nucleus (nucleophagy) as well as for mitophagy which contributes to regulate mitochondrial quantity and quality by eliminating the mitochondria to a basal level to fulfill cellular energy requirements and preventing excess ROS production. Also involved in endoplasmic reticulum-specific autophagic process, in selective removal of ER-associated degradation (ERAD) substrates. Plays a key role in ATG9 and ATG23 cycling through the pre-autophagosomal structure and is necessary to promote ATG18 binding to ATG9 through phosphorylation of ATG9. Catalyzes phosphorylation of ATG4, decreasing the interaction between ATG4 and ATG8 and impairing deconjugation of PE-conjugated forms of ATG8. The polypeptide is Serine/threonine-protein kinase ATG1 (Sclerotinia sclerotiorum (strain ATCC 18683 / 1980 / Ss-1) (White mold)).